The chain runs to 375 residues: MTNAESRTVLRILDANANRAGEGLRTLEESARFILNDLSLTERLKTHRHDLAVAMRRWNRFQLIGSRDTPGDVGTGVQTASEQSRADLSSVIAAATTRTQQALRCLEEYGKTADSEFAACIESIRYQCYATFRELELKMAGLNARSRKLVEARLYALIACEPNADYLKARIAELVDAGVDVIQLRDSSVDDRTLFEQAKLGAAIAAERDVLWIINDRADIAVASGADGVHVGQEELPVDAVREVVGPERLIGLSTHSIEQVRLATRTTANYIGCGPTFPGKTKSFDRYPGCEFLTQVSDAERSGELTLPAFAIGGIGLGNVEQVAQSGIGRVAVTGALAPHDGLHQTAMGMREILERVPLRITPDSSDVCPLPND.

The segment at 1–127 (MTNAESRTVL…AACIESIRYQ (127 aa)) is unknown. The interval 128–375 (CYATFRELEL…SSDVCPLPND (248 aa)) is thiamine-phosphate synthase. Residues 183 to 185 (QLR) and N215 contribute to the 4-amino-2-methyl-5-(diphosphooxymethyl)pyrimidine site. 2 residues coordinate Mg(2+): D216 and E235. S254 and K283 together coordinate 4-amino-2-methyl-5-(diphosphooxymethyl)pyrimidine. G315 lines the 2-[(2R,5Z)-2-carboxy-4-methylthiazol-5(2H)-ylidene]ethyl phosphate pocket.

It belongs to the thiamine-phosphate synthase family. Mg(2+) serves as cofactor.

It catalyses the reaction 2-[(2R,5Z)-2-carboxy-4-methylthiazol-5(2H)-ylidene]ethyl phosphate + 4-amino-2-methyl-5-(diphosphooxymethyl)pyrimidine + 2 H(+) = thiamine phosphate + CO2 + diphosphate. It carries out the reaction 2-(2-carboxy-4-methylthiazol-5-yl)ethyl phosphate + 4-amino-2-methyl-5-(diphosphooxymethyl)pyrimidine + 2 H(+) = thiamine phosphate + CO2 + diphosphate. The enzyme catalyses 4-methyl-5-(2-phosphooxyethyl)-thiazole + 4-amino-2-methyl-5-(diphosphooxymethyl)pyrimidine + H(+) = thiamine phosphate + diphosphate. It functions in the pathway cofactor biosynthesis; thiamine diphosphate biosynthesis; thiamine phosphate from 4-amino-2-methyl-5-diphosphomethylpyrimidine and 4-methyl-5-(2-phosphoethyl)-thiazole: step 1/1. Functionally, condenses 4-methyl-5-(beta-hydroxyethyl)thiazole monophosphate (THZ-P) and 2-methyl-4-amino-5-hydroxymethyl pyrimidine pyrophosphate (HMP-PP) to form thiamine monophosphate (TMP). This Rhodopirellula baltica (strain DSM 10527 / NCIMB 13988 / SH1) protein is Thiamine-phosphate synthase (thiE).